We begin with the raw amino-acid sequence, 585 residues long: MNIFADFDARIKKTLQDIDLKPKDGGELDLSRIGVEPPRDASHGDIATNAAMVLSKAVGQNPRELAARIAEALKADEDVESVDVAGPGFINLRLKASYWQRELLVMLNEGTDFGRSRLGAGKKVNVEYVSANPTGPMHVGHCRGAVVGDVLANLLKFAGYDVVKEYYINDAGAQIDVLARSVMLRYREALGESIGEIPAGLYPGDYLVRVGQELAGEFGTKLLEMPEAEALAIVKDRTIDAMMAMIRADLDALNVHHDVFYSERKLHVDHARAIRNAINDLTLKGHVYKGKLPPPKGQLPGDWEDCEQTLFRSTEVGDDIDRPLMKSDGSFTYFAGDVAYFKDKYDRGFNEMIYVLGADHGGYVKRLEAVARAVSDGKAKLTVLLCQLVKLFRNGEPARMSKRAGEFITLRDVVDEVGRDPVRFMMLYRKNDAPLDFDFAKVTEQSKDNPVFYVQYASARCHSVFRQAADQLGLVDLDRVAMGSHFEKLTDESEIALVRKLAEYPRLIESAAIHQEPHRLAFYLYDLASSFHSQWNRGTENPDLRFIKVNDPDLSLARLGLVQVVSDVLTSGLTIIGADAPTEMR.

The short motif at 131 to 141 is the 'HIGH' region element; that stretch reads ANPTGPMHVGH.

This sequence belongs to the class-I aminoacyl-tRNA synthetase family. Monomer.

The protein resides in the cytoplasm. It catalyses the reaction tRNA(Arg) + L-arginine + ATP = L-arginyl-tRNA(Arg) + AMP + diphosphate. The chain is Arginine--tRNA ligase from Brucella ovis (strain ATCC 25840 / 63/290 / NCTC 10512).